The sequence spans 420 residues: Methanogen homoaconitase large subunit (420 aa).

[4Fe-4S] cluster contacts are provided by Cys302, Cys362, and Cys365.

Belongs to the aconitase/IPM isomerase family. LeuC type 2 subfamily. As to quaternary structure, heterotetramer of 2 HacA and 2 HacB proteins. It depends on [4Fe-4S] cluster as a cofactor.

It carries out the reaction (2R)-homocitrate = (2R,3S)-homoisocitrate. The catalysed reaction is (2R)-homocitrate = cis-homoaconitate + H2O. The enzyme catalyses (2R,3S)-homoisocitrate = cis-homoaconitate + H2O. It catalyses the reaction cis-(homo)2aconitate + H2O = (2R,3S)-iso(homo)2citrate. It carries out the reaction cis-(homo)3aconitate + H2O = (2R,3S)-iso(homo)3citrate. The catalysed reaction is (R)-malate = maleate + H2O. The enzyme catalyses cis-aconitate + H2O = D-threo-isocitrate. Its pathway is organic acid metabolism; 2-oxosuberate biosynthesis. Functionally, component of a hydro-lyase with broad substrate specificity for cis-unsaturated tricarboxylic acids. Catalyzes both the reversible dehydration of (R)-homocitrate ((R)-2-hydroxybutane-1,2,4-tricarboxylate) to produce cis-homoaconitate ((Z)-but-1-ene-1,2,4-tricarboxylate), and its hydration to homoisocitrate ((1R,2S)-1-hydroxybutane-1,2,4-tricarboxylate). Is also able to hydrate the analogous longer chain substrates cis-homo(2)-aconitate, cis-homo(3)-aconitate, and even the non-physiological cis-homo(4)-aconitate with similar efficiency. These reactions are part of the biosynthesis pathway of coenzyme B. Can also catalyze the hydration of maleate to (R)-malate, and that of cis-aconitate. Cannot catalyze the hydration of citraconate and the dehydration of (S)-homocitrate, citramalate, 2-isopropylmalate, 3-isopropylmalate, citrate or threo-DL-isocitrate. The protein is Methanogen homoaconitase large subunit (hacA) of Methanocaldococcus jannaschii (strain ATCC 43067 / DSM 2661 / JAL-1 / JCM 10045 / NBRC 100440) (Methanococcus jannaschii).